The chain runs to 509 residues: Activin receptor type-1 (509 aa).

The first 20 residues, 1–20 (MVDGVMILPVLIMIALPSPS), serve as a signal peptide directing secretion. The Extracellular segment spans residues 21–123 (MEDEKPKVNP…FPGTQNFHLE (103 aa)). N-linked (GlcNAc...) asparagine glycosylation occurs at N102. Residues 124–146 (VGLIILSVVFAVCLLACLLGVAL) form a helical membrane-spanning segment. At 147-509 (RKFKRRNQER…NSLDKLKTDC (363 aa)) the chain is on the cytoplasmic side. In terms of domain architecture, GS spans 178 to 207 (STLADLLDHSCTSGSGSGLPFLVQRTVARQ). Positions 208 to 502 (ITLLECVGKG…KTLTKIDNSL (295 aa)) constitute a Protein kinase domain. Residues 214–222 (VGKGRYGEV) and K235 contribute to the ATP site. D336 acts as the Proton acceptor in catalysis. S501 is modified (phosphoserine).

This sequence belongs to the protein kinase superfamily. TKL Ser/Thr protein kinase family. TGFB receptor subfamily. Interacts with FKBP1A. Interacts with FCHO1. Interacts with CLU. Interacts with type II receptors AMHR2 and ACVR2A. Interacts with BMP7. Interacts with GDF2/BMP9. Interacts with BMP6 (when glycosylated); the interaction may induce HAMP expression. Interacts with TSC22D1/TSC-22. It depends on Mg(2+) as a cofactor. The cofactor is Mn(2+). Expressed in normal parenchymal cells, endothelial cells, fibroblasts and tumor-derived epithelial cells.

It is found in the membrane. It carries out the reaction L-threonyl-[receptor-protein] + ATP = O-phospho-L-threonyl-[receptor-protein] + ADP + H(+). The enzyme catalyses L-seryl-[receptor-protein] + ATP = O-phospho-L-seryl-[receptor-protein] + ADP + H(+). Functionally, bone morphogenetic protein (BMP) type I receptor that is involved in a wide variety of biological processes, including bone, heart, cartilage, nervous, and reproductive system development and regulation. As a type I receptor, forms heterotetrameric receptor complexes with the type II receptors AMHR2, ACVR2A or ACVR2B. Upon binding of ligands such as BMP7 or GDF2/BMP9 to the heteromeric complexes, type II receptors transphosphorylate ACVR1 intracellular domain. In turn, ACVR1 kinase domain is activated and subsequently phosphorylates SMAD1/5/8 proteins that transduce the signal. In addition to its role in mediating BMP pathway-specific signaling, suppresses TGFbeta/activin pathway signaling by interfering with the binding of activin to its type II receptor. Besides canonical SMAD signaling, can activate non-canonical pathways such as p38 mitogen-activated protein kinases/MAPKs. May promote the expression of HAMP, potentially via its interaction with BMP6. This Homo sapiens (Human) protein is Activin receptor type-1 (ACVR1).